The chain runs to 274 residues: MATLRESIIEELGTKPTIDAAAEVRARVQFLKDYVRSTPAKGFVLGISGGQDSTLAGALAQRAVTELREEGHEAEFVAVRLPYGAQADESDAQIALGFIKPDRSITVNVKPGADATAREASEALGNGELRDFVRGNIKARERMVIQYAIAGQLGYLVIGTDHAAEAITGFFTKFGDGGVDITPLTGLSKRQGAALLQELGAPESTWRKVPTADLEDDRPALPDEVALGVTYSQIDDYLEGKDVSSEVAEKLEKMFANTRHKRTVPVTPLDDWWK.

46-53 contributes to the ATP binding site; it reads GISGGQDS. Aspartate 52 contributes to the Mg(2+) binding site. Arginine 140 serves as a coordination point for deamido-NAD(+). An ATP-binding site is contributed by threonine 160. A Mg(2+)-binding site is contributed by glutamate 165. 2 residues coordinate deamido-NAD(+): lysine 173 and aspartate 180. ATP-binding residues include lysine 189 and threonine 211. 260-261 contacts deamido-NAD(+); sequence HK.

This sequence belongs to the NAD synthetase family. As to quaternary structure, homodimer.

It catalyses the reaction deamido-NAD(+) + NH4(+) + ATP = AMP + diphosphate + NAD(+) + H(+). The protein operates within cofactor biosynthesis; NAD(+) biosynthesis; NAD(+) from deamido-NAD(+) (ammonia route): step 1/1. Catalyzes the ATP-dependent amidation of deamido-NAD to form NAD. Uses ammonia as a nitrogen source. This Rhodococcus erythropolis (strain PR4 / NBRC 100887) protein is NH(3)-dependent NAD(+) synthetase.